A 274-amino-acid chain; its full sequence is Cytochrome b-c1 complex subunit Rieske, mitochondrial (274 aa).

Over 79–103 the chain is Mitochondrial matrix; it reads SHTDVKVPDFSEYRRPEVLDSTKSS. Residues 104-140 traverse the membrane as a helical segment; that stretch reads RESSEARKGFSYLVTAVTTVGVAYAAKNAVTQFVSSM. At 141–274 the chain is on the mitochondrial intermembrane side; the sequence is SASADVLALA…FTSDDMVIVG (134 aa). The region spanning 187 to 272 is the Rieske domain; that stretch reads EAAVELSQLR…YEFTSDDMVI (86 aa). [2Fe-2S] cluster-binding residues include Cys217, His219, Cys236, His239, and Ser241. Cys222 and Cys238 are joined by a disulfide.

Belongs to the Rieske iron-sulfur protein family. Component of the ubiquinol-cytochrome c oxidoreductase (cytochrome b-c1 complex, complex III, CIII), a multisubunit enzyme composed of 11 subunits. The complex is composed of 3 respiratory subunits cytochrome b, cytochrome c1 and Rieske protein UQCRFS1, 2 core protein subunits UQCRC1/QCR1 and UQCRC2/QCR2, and 6 low-molecular weight protein subunits UQCRH/QCR6, UQCRB/QCR7, UQCRQ/QCR8, UQCR10/QCR9, UQCR11/QCR10 and subunit 9, the cleavage product of Rieske protein UQCRFS1. The complex exists as an obligatory dimer and forms supercomplexes (SCs) in the inner mitochondrial membrane with NADH-ubiquinone oxidoreductase (complex I, CI) and cytochrome c oxidase (complex IV, CIV), resulting in different assemblies (supercomplex SCI(1)III(2)IV(1) and megacomplex MCI(2)III(2)IV(2)). Incorporation of the Rieske protein UQCRFS1 is the penultimate step in complex III assembly. Interacts with TTC19, which is involved in the clearance of UQCRFS1 fragments. In terms of assembly, component of the ubiquinol-cytochrome c oxidoreductase (cytochrome b-c1 complex, complex III, CIII). Subunit 9 corresponds to the mitochondrial targeting sequence (MTS) of Rieske protein UQCRFS1. It is retained after processing and incorporated inside complex III, where it remains bound to the complex and localizes between the 2 core subunits UQCRC1/QCR1 and UQCRC2/QCR2. [2Fe-2S] cluster is required as a cofactor. In terms of processing, proteolytic processing is necessary for the correct insertion of UQCRFS1 in the complex III dimer. Several fragments are generated during UQCRFS1 insertion, most probably due to the endogenous matrix-processing peptidase (MPP) activity of the 2 core protein subunits UQCRC1/QCR1 and UQCRC2/QCR2, which are homologous to the 2 mitochondrial-processing peptidase (MPP) subunits beta-MPP and alpha-MPP respectively. The action of the protease is also necessary for the clearance of the UQCRFS1 fragments.

The protein resides in the mitochondrion inner membrane. It carries out the reaction a quinol + 2 Fe(III)-[cytochrome c](out) = a quinone + 2 Fe(II)-[cytochrome c](out) + 2 H(+)(out). Its function is as follows. Component of the ubiquinol-cytochrome c oxidoreductase, a multisubunit transmembrane complex that is part of the mitochondrial electron transport chain which drives oxidative phosphorylation. The respiratory chain contains 3 multisubunit complexes succinate dehydrogenase (complex II, CII), ubiquinol-cytochrome c oxidoreductase (cytochrome b-c1 complex, complex III, CIII) and cytochrome c oxidase (complex IV, CIV), that cooperate to transfer electrons derived from NADH and succinate to molecular oxygen, creating an electrochemical gradient over the inner membrane that drives transmembrane transport and the ATP synthase. The cytochrome b-c1 complex catalyzes electron transfer from ubiquinol to cytochrome c, linking this redox reaction to translocation of protons across the mitochondrial inner membrane, with protons being carried across the membrane as hydrogens on the quinol. In the process called Q cycle, 2 protons are consumed from the matrix, 4 protons are released into the intermembrane space and 2 electrons are passed to cytochrome c. The Rieske protein is a catalytic core subunit containing a [2Fe-2S] iron-sulfur cluster. It cycles between 2 conformational states during catalysis to transfer electrons from the quinol bound in the Q(0) site in cytochrome b to cytochrome c1. Incorporation of UQCRFS1 is the penultimate step in complex III assembly. Functionally, component of the ubiquinol-cytochrome c oxidoreductase (cytochrome b-c1 complex, complex III, CIII). UQCRFS1 undergoes proteolytic processing once it is incorporated in the complex III dimer. One of the fragments, called subunit 9, corresponds to its mitochondrial targeting sequence (MTS). The proteolytic processing is necessary for the correct insertion of UQCRFS1 in the complex III dimer, but the persistence of UQCRFS1-derived fragments may prevent newly imported UQCRFS1 to be processed and assembled into complex III and is detrimental for the complex III structure and function. The protein is Cytochrome b-c1 complex subunit Rieske, mitochondrial (UQCRFS1) of Symphalangus syndactylus (Siamang).